Here is a 241-residue protein sequence, read N- to C-terminus: Phosphoribosylaminoimidazole-succinocarboxamide synthase (241 aa).

The protein belongs to the SAICAR synthetase family.

The enzyme catalyses 5-amino-1-(5-phospho-D-ribosyl)imidazole-4-carboxylate + L-aspartate + ATP = (2S)-2-[5-amino-1-(5-phospho-beta-D-ribosyl)imidazole-4-carboxamido]succinate + ADP + phosphate + 2 H(+). Its pathway is purine metabolism; IMP biosynthesis via de novo pathway; 5-amino-1-(5-phospho-D-ribosyl)imidazole-4-carboxamide from 5-amino-1-(5-phospho-D-ribosyl)imidazole-4-carboxylate: step 1/2. The protein is Phosphoribosylaminoimidazole-succinocarboxamide synthase of Caldivirga maquilingensis (strain ATCC 700844 / DSM 13496 / JCM 10307 / IC-167).